The following is a 460-amino-acid chain: MSARPQNVGIKAIEVYFPSQCVDQAELEKFDGVSEGKYTIGLGQTKMSFCDDREDIYSIALTTCSSLLRKYNIDPKSIGRLEVGTETLLDKSKSVKSVLMQLFAPHGNTNIEGVDTVNACYGGTNAVFNSINWVESSAWDGRDAIVVCGDIALYAKGAARPTGGAGAVAMLIGPDAPIVFEPGLRGSYVTHAYDFFKPDLTSEYPVVDGHFSLKCYTEAVDACYKAYAAREKVLKAKVQNGTNGVENDETKTPLDRFDYVLFHAPTCKLVQKSYGRMLYNDYLANPSHPAFAEVPSELRDLDYEKSFTDKTVEKTFMGLTKKTFAERVRPGLDVATLCGNMYTATVYAGLASLLSNVTFDPSQPKRVALFSYGSGLASSMFSVKIVGDVSGMVEKLDLHKRLNARTVLPPQTYDEMCILREHAHLKKNFKPTGNPDTLFPGTYYLTEIDDMFRRKYEIKA.

The active-site Proton donor/acceptor is E86. Catalysis depends on C120, which acts as the Acyl-thioester intermediate. 7 residues coordinate (3S)-3-hydroxy-3-methylglutaryl-CoA: C120, T162, S212, H263, K272, N340, and S374. H263 serves as the catalytic Proton donor/acceptor.

The protein belongs to the thiolase-like superfamily. HMG-CoA synthase family.

It catalyses the reaction acetoacetyl-CoA + acetyl-CoA + H2O = (3S)-3-hydroxy-3-methylglutaryl-CoA + CoA + H(+). The protein operates within metabolic intermediate biosynthesis; (R)-mevalonate biosynthesis; (R)-mevalonate from acetyl-CoA: step 2/3. Functionally, hydroxymethylglutaryl-CoA synthase; part of the first module of ergosterol biosynthesis pathway that includes the early steps of the pathway, conserved across all eukaryotes, and which results in the formation of mevalonate from acetyl-coenzyme A (acetyl-CoA). Erg13A and erg13B condense acetyl-CoA with acetoacetyl-CoA to form hydroxymethylglutaryl-CoA (HMG-CoA). The first module starts with the action of the cytosolic acetyl-CoA acetyltransferase erg10B that catalyzes the formation of acetoacetyl-CoA. The hydroxymethylglutaryl-CoA synthases erg13A and erg13B then condense acetyl-CoA with acetoacetyl-CoA to form HMG-CoA. The rate-limiting step of the early module is the reduction to mevalonate by the 3-hydroxy-3-methylglutaryl-coenzyme A (HMG-CoA) reductases hmg1 and hmg2. Mevalonate is also a precursor for the extracellular siderophore triacetylfusarinine C (TAFC). This chain is Hydroxymethylglutaryl-CoA synthase erg13B, found in Aspergillus fumigatus (strain ATCC MYA-4609 / CBS 101355 / FGSC A1100 / Af293) (Neosartorya fumigata).